The chain runs to 408 residues: Argininosuccinate synthase (408 aa).

ATP-binding positions include 12–20 (AYSGGLDTS) and Ala39. L-citrulline is bound by residues Tyr92 and Ser97. Position 122 (Gly122) interacts with ATP. Residues Thr124, Asn128, and Asp129 each coordinate L-aspartate. Residue Asn128 coordinates L-citrulline. Residues Arg132, Ser183, Ser192, Glu268, and Tyr280 each contribute to the L-citrulline site.

It belongs to the argininosuccinate synthase family. Type 1 subfamily. Homotetramer.

The protein localises to the cytoplasm. The catalysed reaction is L-citrulline + L-aspartate + ATP = 2-(N(omega)-L-arginino)succinate + AMP + diphosphate + H(+). The protein operates within amino-acid biosynthesis; L-arginine biosynthesis; L-arginine from L-ornithine and carbamoyl phosphate: step 2/3. The sequence is that of Argininosuccinate synthase from Caulobacter vibrioides (strain ATCC 19089 / CIP 103742 / CB 15) (Caulobacter crescentus).